The sequence spans 247 residues: LOB domain-containing protein 38 (247 aa).

Positions 1–107 (MSCNGCRVLR…VETVLRGGSL (107 aa)) constitute an LOB domain. The segment covering 157 to 170 (FSSSRSRSRSTASP) has biased composition (low complexity). The interval 157–184 (FSSSRSRSRSTASPPKRKRLSSEQQPSS) is disordered.

It belongs to the LOB domain-containing protein family. In terms of tissue distribution, expressed in young shoots, roots, stems, leaves and flowers.

The sequence is that of LOB domain-containing protein 38 (LBD38) from Arabidopsis thaliana (Mouse-ear cress).